A 270-amino-acid chain; its full sequence is Maximins-S type D (270 aa).

The N-terminal stretch at M1 to A18 is a signal peptide. Propeptides lie at residues K19–R35 and S52–R65. The residue at position 83 (N83) is an Asparagine amide. Residues S87–R100 constitute a propeptide that is removed on maturation. A Lysine amide modification is found at K118. A propeptide spanning residues S122 to R135 is cleaved from the precursor. N153 carries the post-translational modification Asparagine amide. A propeptide spanning residues S157–R170 is cleaved from the precursor. At N188 the chain carries Asparagine amide. A propeptide spanning residues S192–R205 is cleaved from the precursor. Position 223 is a lysine amide (K223). Positions S227 to R240 are excised as a propeptide. K258 is modified (lysine amide). Residues S262–K270 constitute a propeptide that is removed on maturation.

It belongs to the maximin-S family. In terms of tissue distribution, expressed by the skin dorsal glands.

Its subcellular location is the secreted. Maximin-S1 has no antimicrobial activity. Has no hemolytic activity. Its function is as follows. Maximin-S2 has an activity against mycoplasma but has no activity against common Gram-positive and Gram-negative bacteria nor fungi. Has no hemolytic activity. In terms of biological role, maximin-S3 has an activity against mycoplasma but has no activity against common Gram-positive and Gram-negative bacteria nor fungi. Has no hemolytic activity. Functionally, maximin-S4 has an activity against mycoplasma but has no activity against common Gram-positive and Gram-negative bacteria nor fungi. Has no hemolytic activity. Maximin-S5 has an activity against mycoplasma but has no activity against common Gram-positive and Gram-negative bacteria nor fungi. Has no hemolytic activity. This is Maximins-S type D from Bombina maxima (Giant fire-bellied toad).